The sequence spans 263 residues: Lens fiber major intrinsic protein (263 aa).

The Cytoplasmic segment spans residues 1-9; sequence MWELRSASF. The helical transmembrane segment at 10–29 threads the bilayer; it reads WRAIFAEFFATLFYVFFGLG. The Extracellular segment spans residues 30–41; the sequence is SSLRWAPGPLHV. The chain crosses the membrane as a helical span at residues 42-59; the sequence is LQVALAFGLALATLVQTV. Residues 60-61 are Cytoplasmic-facing; it reads GH. An intramembrane region (discontinuously helical) is located at residues 62-77; sequence ISGAHVNPAVTFAFLV. Residues 68-70 carry the NPA 1 motif; the sequence is NPA. Residues 78-82 lie on the Cytoplasmic side of the membrane; it reads GSQMS. Residues 83–106 traverse the membrane as a helical segment; that stretch reads LLRAFCYIAAQLLGAVAGAAVLYS. The Extracellular portion of the chain corresponds to 107–127; that stretch reads VTPPAVRGNLALNTLHAGVSV. Residues 128–148 form a helical membrane-spanning segment; sequence GQATTVEIFLTLQFVLCIFAT. The Cytoplasmic portion of the chain corresponds to 149–156; that stretch reads YDERRNGR. The helical transmembrane segment at 157 to 175 threads the bilayer; sequence MGSVALAVGFSLTLGHLFG. Topologically, residues 176-178 are extracellular; it reads MYY. Positions 179-193 form an intramembrane region, discontinuously helical; the sequence is TGAGMNPARSFAPAI. Residues 184-186 carry the NPA 2 motif; it reads NPA. At 194-200 the chain is on the extracellular side; sequence LTRNFSN. Residues 201–222 form a helical membrane-spanning segment; it reads HWVYWVGPIIGGGLGSLLYDFL. The Cytoplasmic segment spans residues 223-263; sequence LFPRLKSVSERLSILKGARPSDSNGQPEGTGEPVELKTQAL. The interval 227–237 is interaction with CALM; sequence LKSVSERLSIL. Residues S235, S243, and S245 each carry the phosphoserine modification. Residues 240 to 263 form a disordered region; it reads ARPSDSNGQPEGTGEPVELKTQAL. N246 bears the Deamidated asparagine mark.

The protein belongs to the MIP/aquaporin (TC 1.A.8) family. As to quaternary structure, homotetramer; each monomer provides an independent water pore. Two homotetramers on opposing membranes can dimerize, forming a cell-cell junction. Interacts with CALM; the calcium-calmodulin/CALM complex interacts with the cytoplasmic domains of two aquaporins, leading to channel closure. Interacts with BFSP1 (via C-terminus); prevents calcium-dependent inhibition of the water channel activity. Post-translationally, subject to partial proteolytic cleavage in the eye lens core. Partial proteolysis promotes interactions between tetramers from adjoining membranes. Fatty acylated at Met-1 and Lys-238. The acyl modifications, in decreasing order of ion abundance, are: oleoyl (C18:1) &gt; palmitoyl (C16:0) &gt; stearoyl (C18:0) &gt; eicosenoyl (C20:1) &gt; dihomo-gamma-linolenoyl (C20:3) &gt; palmitoleoyl (C16:1) &gt; eicosadienoyl (C20:2).

It is found in the cell membrane. The protein localises to the cell junction. It carries out the reaction H2O(in) = H2O(out). With respect to regulation, the water channel activity is inhibited by calcium through calmodulin/CALM. Aquaporins form homotetrameric transmembrane channels, with each monomer independently mediating water transport across the plasma membrane along its osmotic gradient. Specifically expressed in lens fiber cells, this aquaporin is crucial for maintaining lens water homeostasis and transparency. Beyond water permeability, it also acts as a cell-to-cell adhesion molecule, forming thin junctions between lens fiber cells that are essential for maintaining the ordered structure and transparency of the lens. The protein is Lens fiber major intrinsic protein of Rattus norvegicus (Rat).